The chain runs to 331 residues: MASTPKANVPKIDVSPLFGDNMEEKMKVARAIDAASRDTGFFYAVNHGVDVKRLSNKTREFHFSITDEEKWDLAIRAYNKEHQDQIRAGYYLSIPEKKAVESFCYLNPNFKPDHPLIQSKTPTHEVNVWPDEKKHPGFREFAEQYYWDVFGLSSALLRGYALALGKEEDFFSRHFKKEDALSSVVLIRYPYLNPYPPAAIKTAEDGTKLSFEWHEDVSLITVLYQSDVANLQVEMPQGYLDIEADDNAYLVNCGSYMAHITNNYYPAPIHRVKWVNEERQSLPFFVNLGFNDTVQPWDPSKEDGKTDQRPISYGDYLQNGLVSLINKNGQT.

Isopenicillin N contacts are provided by R87, Y91, S183, and Y189. N-[(5S)-5-amino-5-carboxypentanoyl]-L-cysteinyl-D-valine contacts are provided by R87, Y91, S183, Y189, H214, and D216. Positions 181 to 288 constitute a Fe2OG dioxygenase domain; that stretch reads LSSVVLIRYP…RQSLPFFVNL (108 aa). Fe(2+) is bound by residues H214, D216, and H270. Position 279 (R279) interacts with 2-oxoglutarate. S281 contacts isopenicillin N. N-[(5S)-5-amino-5-carboxypentanoyl]-L-cysteinyl-D-valine is bound at residue S281.

Belongs to the iron/ascorbate-dependent oxidoreductase family. Fe(2+) is required as a cofactor.

Its subcellular location is the cytoplasm. It is found in the cytosol. It catalyses the reaction N-[(5S)-5-amino-5-carboxypentanoyl]-L-cysteinyl-D-valine + O2 = isopenicillin N + 2 H2O. Its pathway is antibiotic biosynthesis; penicillin G biosynthesis; penicillin G from L-alpha-aminoadipate and L-cysteine and L-valine: step 2/3. Isopenicillin N synthase; part of the gene cluster that mediates the biosynthesis of penicillin, the world's most important antibiotic. The first step of the pathway is performed by the trimodular NRPS acvA that produces the tripeptide N-[(5S)-5-amino-5-carboxypentanoyl]-L-cysteinyl-D-valine (LLD-ACV or ACV) via condensation of the 3 residues L-2-aminoadipate, L-cysteine and L-valine. The precursor amino acids for penicillin biosynthesis are withdrawn from the vacuolar amino acid pool by the MFS-type transporter penV. Each of the constituent amino acids of the tripeptide acv are activated as aminoacyl-adenylates with peptide bonds formed through the participation of amino acid thioester intermediates. The tripeptide ACV is then cyclized to form isopenicillin N (IPN) by the isopenicillin N synthase ipnA that forms the beta-lactam nucleus. Finally, the alpha-aminoadipyl side chain is exchanged for phenylacetic acid by the isopenicillin N acyltransferase aatA to yield penicillin. This step occurs in the peroxisomal matrix and the penM and paaT transporters are involved in the isopenicillin N and phenylacetic acid import into the peroxisome, respectively. This is Isopenicillin N synthase from Penicillium rubens (strain ATCC 28089 / DSM 1075 / NRRL 1951 / Wisconsin 54-1255) (Penicillium chrysogenum).